The following is a 521-amino-acid chain: MFS siderochrome iron transporter 1 (521 aa).

Polar residues predominate over residues Met1–Gln10. The segment at Met1–Pro29 is disordered. The segment covering Asp11–Pro29 has biased composition (basic and acidic residues). The next 5 membrane-spanning stretches (helical) occupy residues Trp62–Gly82, Phe99–Cys119, Trp126–Gln146, Phe148–Val168, and Ile187–Ile207. N-linked (GlcNAc...) asparagine glycosylation is present at Asn209. The next 6 helical transmembrane spans lie at Tyr229–Phe249, Leu330–Leu350, Val379–Pro399, Lys404–Ala424, Leu431–Ile451, and Gly466–Ala486. Residue Asn487 is glycosylated (N-linked (GlcNAc...) asparagine). A helical membrane pass occupies residues Ala491–Leu511.

It belongs to the major facilitator superfamily.

It localises to the membrane. Functionally, major facilitator transporter probably involved in siderophore basidioferrin transmembrane transport. The polypeptide is MFS siderochrome iron transporter 1 (Ceriporiopsis subvermispora (strain B) (White-rot fungus)).